We begin with the raw amino-acid sequence, 52 residues long: Large ribosomal subunit protein bL33 (52 aa).

The protein belongs to the bacterial ribosomal protein bL33 family.

The polypeptide is Large ribosomal subunit protein bL33 (Helicobacter pylori (strain HPAG1)).